A 412-amino-acid polypeptide reads, in one-letter code: Cathepsin D (412 aa).

Positions 1–20 (MQPSSLLPLALCLLAAPASA) are cleaved as a signal peptide. Positions 21 to 64 (LVRIPLHKFTSIRRTMSEVGGSVEDLIAKGPVSKYSQAVPAVTE) are cleaved as a propeptide — activation peptide. Thr63 carries an O-linked (GalNAc...) threonine glycan. Residues 79–407 (YYGEIGIGTP…DRDNNRVGFA (329 aa)) enclose the Peptidase A1 domain. 2 disulfides stabilise this stretch: Cys91–Cys160 and Cys110–Cys117. Residue Asp97 is part of the active site. Asn134 and Asn263 each carry an N-linked (GlcNAc...) asparagine glycan. A disulfide bridge connects residues Cys286 and Cys290. The active site involves Asp295. Cys329 and Cys366 are oxidised to a cystine.

This sequence belongs to the peptidase A1 family. Consists of a light chain and a heavy chain. Interacts with ADAM30; this leads to activation of CTSD. Interacts with GRN; stabilizes CTSD; increases its proteolytic activity. Post-translationally, N- and O-glycosylated. In terms of processing, undergoes proteolytic cleavage and activation by ADAM30. As well as the major heavy chain which starts at Leu-169, 2 minor forms starting at Gly-170 and Gly-171 have been identified. An additional form starting at Ala-168 has also been identified. As to expression, expressed in the aorta extracellular space (at protein level). Expressed in liver (at protein level).

Its subcellular location is the lysosome. The protein localises to the melanosome. It is found in the secreted. The protein resides in the extracellular space. The enzyme catalyses Specificity similar to, but narrower than, that of pepsin A. Does not cleave the 4-Gln-|-His-5 bond in B chain of insulin.. Its function is as follows. Acid protease active in intracellular protein breakdown. Plays a role in APP processing following cleavage and activation by ADAM30 which leads to APP degradation. Involved in the pathogenesis of several diseases such as breast cancer and possibly Alzheimer disease. This chain is Cathepsin D (CTSD), found in Homo sapiens (Human).